Consider the following 181-residue polypeptide: MANTGAAKRIIEPLDPNRHDRAAFFCGIIQVDNFFKKTANKLSKADNLRVYVMTEDDGTTVIGFYAINSHSISYADLPERFSRTRPGHGSIPAAYISMIGRDQRYRGGGYGGDLLTDCLQRIAGIADQIGIAVVLLDVLVCGDEEKTSRRVALYSEYGFQPLPSMPLRMFLPIATIRSLMG.

This sequence belongs to the acetyltransferase family. As to quaternary structure, forms a complex with cognate antitoxin TacA.

In terms of biological role, probable toxin component of a type II toxin-antitoxin (TA) system. Might acetylate tRNA and inhibit translation. Should be neutralized by cognate antitoxin TacA (y4aR). The protein is Probable toxin TacT of Sinorhizobium fredii (strain NBRC 101917 / NGR234).